Here is a 64-residue protein sequence, read N- to C-terminus: Small ribosomal subunit protein bS21 (64 aa).

A disordered region spans residues 40–64; sequence PPSVKRKIKSQEAQRRMRRTKRKRF. The segment covering 55–64 has biased composition (basic residues); the sequence is RMRRTKRKRF.

It belongs to the bacterial ribosomal protein bS21 family.

In Elusimicrobium minutum (strain Pei191), this protein is Small ribosomal subunit protein bS21.